We begin with the raw amino-acid sequence, 100 residues long: Small ribosomal subunit protein uS14c (100 aa).

Belongs to the universal ribosomal protein uS14 family. Part of the 30S ribosomal subunit.

Its subcellular location is the plastid. It localises to the chloroplast. In terms of biological role, binds 16S rRNA, required for the assembly of 30S particles. The polypeptide is Small ribosomal subunit protein uS14c (Cyanidioschyzon merolae (strain NIES-3377 / 10D) (Unicellular red alga)).